The chain runs to 263 residues: 7beta-hydroxysteroid dehydrogenase (263 aa).

NADP(+) is bound by residues 17–21 (TEGVG), 40–41 (RR), and 66–67 (DF). Residue Y156 is the Proton acceptor of the active site. S240 provides a ligand contact to NADP(+).

It belongs to the short-chain dehydrogenases/reductases (SDR) family. As to quaternary structure, homodimer.

The enzyme catalyses a 7beta-hydroxysteroid + NADP(+) = a 7-oxosteroid + NADPH + H(+). It carries out the reaction 7-oxolithocholate + NADPH + H(+) = ursodeoxycholate + NADP(+). It catalyses the reaction 7beta-hydroxy-3,12-dioxo-5beta-cholan-24-oate + NADP(+) = dehydrocholate + NADPH + H(+). The catalysed reaction is ursocholate + NADP(+) = 3alpha,12alpha-dihydroxy-7-oxo-5beta-cholanate + NADPH + H(+). Functionally, 7beta-hydroxysteroid dehydrogenase that catalyzes the reduction of the 7-oxo group of 7-oxo-lithocholate (7-oxo-LCA), to yield ursodeoxycholate (UDCA). As C.aerofaciens is an intestinal bacterium, this enzyme probably contributes to the formation of UDCA in the human colon. UDCA is regarded as a chemopreventive beneficial secondary bile acid due to its low hydrophobicity; it protects hepatocytes and bile duct epithelial cells against necrosis and apoptosis induced by more hydrophobic secondary bile acids like deoxycholate (DCA). This enzyme is also able to catalyze the reverse reaction, i.e. the oxidation of the 7beta-hydroxy group of UDCA to 7-oxo-LCA. To a lesser extent, is also active on the taurine- and glycine-conjugates of ursodeoxycholate. It is specific for NADPH/NADP(+) as the electron acceptor/donor since it is not active with NADH/NAD(+). In the presence of NADPH, 7beta-HSDH can also reduce dehydrocholate. And is also able to oxidize ursocholate. This chain is 7beta-hydroxysteroid dehydrogenase, found in Collinsella aerofaciens (strain ATCC 25986 / DSM 3979 / JCM 10188 / KCTC 3647 / NCTC 11838 / VPI 1003).